The sequence spans 268 residues: Glucosamine-6-phosphate deaminase (268 aa).

D67 acts as the Proton acceptor; for enolization step in catalysis. The active-site For ring-opening step is N137. The Proton acceptor; for ring-opening step role is filled by H139. The For ring-opening step role is filled by E144.

Belongs to the glucosamine/galactosamine-6-phosphate isomerase family. NagB subfamily. In terms of assembly, homohexamer.

The enzyme catalyses alpha-D-glucosamine 6-phosphate + H2O = beta-D-fructose 6-phosphate + NH4(+). The protein operates within amino-sugar metabolism; N-acetylneuraminate degradation; D-fructose 6-phosphate from N-acetylneuraminate: step 5/5. Its function is as follows. Catalyzes the reversible isomerization-deamination of glucosamine 6-phosphate (GlcN6P) to form fructose 6-phosphate (Fru6P) and ammonium ion. In Pseudoalteromonas translucida (strain TAC 125), this protein is Glucosamine-6-phosphate deaminase.